A 304-amino-acid chain; its full sequence is Putative S-adenosyl-L-methionine-dependent methyltransferase MAP_4189c (304 aa).

S-adenosyl-L-methionine contacts are provided by residues Asp-130 and 159–160 (DL).

This sequence belongs to the UPF0677 family.

Its function is as follows. Exhibits S-adenosyl-L-methionine-dependent methyltransferase activity. The polypeptide is Putative S-adenosyl-L-methionine-dependent methyltransferase MAP_4189c (Mycolicibacterium paratuberculosis (strain ATCC BAA-968 / K-10) (Mycobacterium paratuberculosis)).